Reading from the N-terminus, the 348-residue chain is Phosphoribosylformylglycinamidine cyclo-ligase (348 aa).

The protein belongs to the AIR synthase family.

The protein resides in the cytoplasm. The catalysed reaction is 2-formamido-N(1)-(5-O-phospho-beta-D-ribosyl)acetamidine + ATP = 5-amino-1-(5-phospho-beta-D-ribosyl)imidazole + ADP + phosphate + H(+). It functions in the pathway purine metabolism; IMP biosynthesis via de novo pathway; 5-amino-1-(5-phospho-D-ribosyl)imidazole from N(2)-formyl-N(1)-(5-phospho-D-ribosyl)glycinamide: step 2/2. This chain is Phosphoribosylformylglycinamidine cyclo-ligase, found in Ruegeria sp. (strain TM1040) (Silicibacter sp.).